The following is a 189-amino-acid chain: Probable nicotinate-nucleotide adenylyltransferase (189 aa).

This sequence belongs to the NadD family.

It catalyses the reaction nicotinate beta-D-ribonucleotide + ATP + H(+) = deamido-NAD(+) + diphosphate. It participates in cofactor biosynthesis; NAD(+) biosynthesis; deamido-NAD(+) from nicotinate D-ribonucleotide: step 1/1. Functionally, catalyzes the reversible adenylation of nicotinate mononucleotide (NaMN) to nicotinic acid adenine dinucleotide (NaAD). This Bacillus mycoides (strain KBAB4) (Bacillus weihenstephanensis) protein is Probable nicotinate-nucleotide adenylyltransferase.